The chain runs to 601 residues: Proline--tRNA ligase (601 aa).

It belongs to the class-II aminoacyl-tRNA synthetase family. ProS type 1 subfamily. As to quaternary structure, homodimer.

It localises to the cytoplasm. The enzyme catalyses tRNA(Pro) + L-proline + ATP = L-prolyl-tRNA(Pro) + AMP + diphosphate. In terms of biological role, catalyzes the attachment of proline to tRNA(Pro) in a two-step reaction: proline is first activated by ATP to form Pro-AMP and then transferred to the acceptor end of tRNA(Pro). As ProRS can inadvertently accommodate and process non-cognate amino acids such as alanine and cysteine, to avoid such errors it has two additional distinct editing activities against alanine. One activity is designated as 'pretransfer' editing and involves the tRNA(Pro)-independent hydrolysis of activated Ala-AMP. The other activity is designated 'posttransfer' editing and involves deacylation of mischarged Ala-tRNA(Pro). The misacylated Cys-tRNA(Pro) is not edited by ProRS. The sequence is that of Proline--tRNA ligase from Tropheryma whipplei (strain TW08/27) (Whipple's bacillus).